The chain runs to 475 residues: MASAARLTMMWEEVTCPICLDPFVEPVSIECGHSFCQECISQVGKGGGSVCPVCRQRFLLKNLRPNRQLANMVNNLKEISQEAREGTQGERCAVHGERLHLFCEKDGKALCWVCAQSRKHRDHAMVPLEEAAQEYQEKLQVALGELRRKQELAEKLEVEIAIKRADWKKTVETQKSRIHAEFVQQKNFLVEEEQRQLQELEKDEREQLRILGEKEAKLAQQSQALQELISELDRRCHSSALELLQEVIIVLERSESWNLKDLDITSPELRSVCHVPGLKKMLRTCAVHITLDPDTANPWLILSEDRRQVRLGDTQQSIPGNEERFDSYPMVLGAQHFHSGKHYWEVDVTGKEAWDLGVCRDSVRRKGHFLLSSKSGFWTIWLWNKQKYEAGTYPQTPLHLQVPPCQVGIFLDYEAGMVSFYNITDHGSLIYSFSECAFTGPLRPFFSPGFNDGGKNTAPLTLCPLNIGSQGSTDY.

Residues 16 to 55 form an RING-type zinc finger; sequence CPICLDPFVEPVSIECGHSFCQECISQVGKGGGSVCPVCR. 4 residues coordinate Zn(2+): C92, H95, C114, and H120. The B box-type zinc finger occupies 92–123; it reads CAVHGERLHLFCEKDGKALCWVCAQSRKHRDH. A coiled-coil region spans residues 128-238; the sequence is LEEAAQEYQE…ISELDRRCHS (111 aa). S266 carries the post-translational modification Phosphoserine. The 198-residue stretch at 268–465 folds into the B30.2/SPRY domain; it reads ELRSVCHVPG…NTAPLTLCPL (198 aa).

The protein belongs to the TRIM/RBCC family. In terms of assembly, homotrimer. Interacts (via C-terminus) with IRF8 (via C-terminus). Component of a SCF(SKP2)-like complex containing CUL1, SKP1, TRIM21 and SKP2. Interacts with CALR, CUL1, FBXW11, HSPA5, IKBKB, IRF3, SKP1 and VCP. Interacts with SKP2; the interaction with SKP2 does not depend on an intact F-box domain. Interacts (via N-terminus and C-terminus) with DCP2 (via N-terminus and C-terminus). Interacts with ULK1, BECN1 and with ATG8 family members, including GABARAP, GABARAPL1, GABARAPL2 and MAP1LC3C/LC3C. Interacts with TRIM21 and SQSTM1/sequestosome 1. Interacts with IRF3. Interacts (via the SPRY domain) with NMI (via coiled-coil domain); the interaction promotes 'Lys-63'-linked ubiquitination of NMI. Interacts with IFI35 and NMI; the interaction facilitates NMI-IFI35 complex formation. (Microbial infection) Interacts (via B30.2/SPRY domain) with severe fever with thrombocytopenia syndrome virus (SFTSV) NSs; this interaction activates NFE2L2-mediated transcriptional activation of antioxidant genes. Post-translationally, autoubiquitinated; does not lead to its proteasomal degradation. Deubiquitinated by USP4; leading to its stabilization. In terms of tissue distribution, isoform 1 and isoform 2 are expressed in fetal and adult heart and fetal lung.

The protein localises to the cytoplasm. It localises to the cytoplasmic vesicle. Its subcellular location is the autophagosome. The protein resides in the nucleus. It is found in the P-body. The protein localises to the stress granule. It catalyses the reaction S-ubiquitinyl-[E2 ubiquitin-conjugating enzyme]-L-cysteine + [acceptor protein]-L-lysine = [E2 ubiquitin-conjugating enzyme]-L-cysteine + N(6)-ubiquitinyl-[acceptor protein]-L-lysine.. The protein operates within protein modification; protein ubiquitination. Its function is as follows. E3 ubiquitin-protein ligase whose activity is dependent on E2 enzymes, UBE2D1, UBE2D2, UBE2E1 and UBE2E2. Forms a ubiquitin ligase complex in cooperation with the E2 UBE2D2 that is used not only for the ubiquitination of USP4 and IKBKB but also for its self-ubiquitination. Component of cullin-RING-based SCF (SKP1-CUL1-F-box protein) E3 ubiquitin-protein ligase complexes such as SCF(SKP2)-like complexes. A TRIM21-containing SCF(SKP2)-like complex is shown to mediate ubiquitination of CDKN1B ('Thr-187' phosphorylated-form), thereby promoting its degradation by the proteasome. Monoubiquitinates IKBKB that will negatively regulates Tax-induced NF-kappa-B signaling. Negatively regulates IFN-beta production post-pathogen recognition by catalyzing polyubiquitin-mediated degradation of IRF3. Mediates the ubiquitin-mediated proteasomal degradation of IgG1 heavy chain, which is linked to the VCP-mediated ER-associated degradation (ERAD) pathway. Promotes IRF8 ubiquitination, which enhanced the ability of IRF8 to stimulate cytokine genes transcription in macrophages. Plays a role in the regulation of the cell cycle progression. Enhances the decapping activity of DCP2. Exists as a ribonucleoprotein particle present in all mammalian cells studied and composed of a single polypeptide and one of four small RNA molecules. At least two isoforms are present in nucleated and red blood cells, and tissue specific differences in RO/SSA proteins have been identified. The common feature of these proteins is their ability to bind HY RNAs.2. Involved in the regulation of innate immunity and the inflammatory response in response to IFNG/IFN-gamma. Organizes autophagic machinery by serving as a platform for the assembly of ULK1, Beclin 1/BECN1 and ATG8 family members and recognizes specific autophagy targets, thus coordinating target recognition with assembly of the autophagic apparatus and initiation of autophagy. Also regulates autophagy through FIP200/RB1CC1 ubiquitination and subsequent decreased protein stability. Represses the innate antiviral response by facilitating the formation of the NMI-IFI35 complex through 'Lys-63'-linked ubiquitination of NMI. During viral infection, promotes cell pyroptosis by mediating 'Lys-6'-linked ubiquitination of ISG12a/IFI27, facilitating its translocation into the mitochondria and subsequent CASP3 activation. When up-regulated through the IFN/JAK/STAT signaling pathway, promotes 'Lys-27'-linked ubiquitination of MAVS, leading to the recruitment of TBK1 and up-regulation of innate immunity. Mediates 'Lys-63'-linked polyubiquitination of G3BP1 in response to heat shock, leading to stress granule disassembly. The sequence is that of E3 ubiquitin-protein ligase TRIM21 from Homo sapiens (Human).